The chain runs to 522 residues: Maturase K (522 aa).

The protein belongs to the intron maturase 2 family. MatK subfamily.

It localises to the plastid. Its subcellular location is the chloroplast. Usually encoded in the trnK tRNA gene intron. Probably assists in splicing its own and other chloroplast group II introns. The sequence is that of Maturase K from Iris orientalis (Yellowband iris).